Reading from the N-terminus, the 230-residue chain is Orotidine 5'-phosphate decarboxylase (230 aa).

Substrate is bound by residues D10, K32, 59–68 (DLKYHDIPNT), T119, R180, Q189, G209, and R210. The Proton donor role is filled by K61.

This sequence belongs to the OMP decarboxylase family. Type 1 subfamily. As to quaternary structure, homodimer.

The enzyme catalyses orotidine 5'-phosphate + H(+) = UMP + CO2. It participates in pyrimidine metabolism; UMP biosynthesis via de novo pathway; UMP from orotate: step 2/2. Catalyzes the decarboxylation of orotidine 5'-monophosphate (OMP) to uridine 5'-monophosphate (UMP). This is Orotidine 5'-phosphate decarboxylase from Haemophilus influenzae (strain PittEE).